The chain runs to 442 residues: GPI mannosyltransferase 1 (442 aa).

8 helical membrane passes run 22–42 (INLT…LIVF), 95–115 (ILIH…IIAY), 177–197 (LASI…IYSI), 242–262 (AFTF…IFLF), 307–327 (MIVA…ITLV), 336–356 (LLLE…QYFI), 361–381 (ILPL…ILFA), and 408–428 (IWVA…KLIL).

It belongs to the PIGM family.

It is found in the endoplasmic reticulum membrane. The protein operates within glycolipid biosynthesis; glycosylphosphatidylinositol-anchor biosynthesis. Mannosyltransferase involved in glycosylphosphatidylinositol-anchor biosynthesis. Transfers the first alpha-1,4-mannose to GlcN-acyl-PI during GPI precursor assembly. The protein is GPI mannosyltransferase 1 (pigm) of Dictyostelium discoideum (Social amoeba).